The chain runs to 226 residues: Probable GPI-anchored adhesin-like protein PGA28 (226 aa).

Residues 1–26 (MKFFAYFAVIALSSASLINLFKRATA) form the signal peptide. The tract at residues 119–209 (DTEATTGSDT…SQQTSSHAGG (91 aa)) is disordered. Positions 131 to 148 (KAATGATTSAGTGVTKTS) are enriched in low complexity. Residues 149-160 (ETGGVSSTANSE) show a composition bias toward polar residues. The segment covering 161–208 (AKSGSVTTSKSGSTSISESKTTSGSSSSGKSSSSTSSASSQQTSSHAG) has biased composition (low complexity). The GPI-anchor amidated serine moiety is linked to residue S197. A propeptide spans 198-226 (ASSQQTSSHAGGASGAFVSLLGLFAALLI) (removed in mature form).

Post-translationally, predicted to be a cleavage substrate for KEX2.

The protein resides in the cell membrane. Functionally, putative adhesin which is involved in cell adhesion and virulence. Plays a role in Candida-bacterial interactions and subsequent regulation of filamentation. This is Probable GPI-anchored adhesin-like protein PGA28 (PGA28) from Candida albicans (strain SC5314 / ATCC MYA-2876) (Yeast).